The following is a 398-amino-acid chain: 8-amino-7-oxononanoate synthase (398 aa).

Residues arginine 22 and arginine 29 each coordinate substrate. Residue 109 to 110 coordinates pyridoxal 5'-phosphate; the sequence is GW. A substrate-binding site is contributed by histidine 141. Pyridoxal 5'-phosphate-binding positions include serine 189, 214-217, and 242-245; these read DEAH and TFSK. N6-(pyridoxal phosphate)lysine is present on lysine 245. A substrate-binding site is contributed by threonine 359.

It belongs to the class-II pyridoxal-phosphate-dependent aminotransferase family. BioF subfamily. In terms of assembly, homodimer. Pyridoxal 5'-phosphate is required as a cofactor.

The enzyme catalyses 6-carboxyhexanoyl-[ACP] + L-alanine + H(+) = (8S)-8-amino-7-oxononanoate + holo-[ACP] + CO2. Its pathway is cofactor biosynthesis; biotin biosynthesis. Its function is as follows. Catalyzes the decarboxylative condensation of pimeloyl-[acyl-carrier protein] and L-alanine to produce 8-amino-7-oxononanoate (AON), [acyl-carrier protein], and carbon dioxide. The polypeptide is 8-amino-7-oxononanoate synthase (Gluconacetobacter diazotrophicus (strain ATCC 49037 / DSM 5601 / CCUG 37298 / CIP 103539 / LMG 7603 / PAl5)).